The following is a 106-amino-acid chain: Follitropin subunit beta (106 aa).

Disulfide bonds link Cys-1-Cys-49, Cys-15-Cys-64, Cys-18-Cys-102, Cys-26-Cys-80, Cys-30-Cys-82, and Cys-85-Cys-92. Residues Asn-5 and Asn-22 are each glycosylated (N-linked (GlcNAc...) asparagine).

The protein belongs to the glycoprotein hormones subunit beta family. Heterodimer. The active follitropin is a heterodimer composed of an alpha chain/CGA shared with other hormones and a unique beta chain/FSHB shown here.

The protein localises to the secreted. Functionally, together with the alpha chain CGA constitutes follitropin, the follicle-stimulating hormone, and provides its biological specificity to the hormone heterodimer. Binds FSHR, a G protein-coupled receptor, on target cells to activate downstream signaling pathways. Follitropin is involved in follicle development and spermatogenesis in reproductive organs. The protein is Follitropin subunit beta (FSHB) of Struthio camelus (Common ostrich).